Reading from the N-terminus, the 335-residue chain is Phosphate acyltransferase (335 aa).

It belongs to the PlsX family. As to quaternary structure, homodimer. Probably interacts with PlsY.

The protein resides in the cytoplasm. It carries out the reaction a fatty acyl-[ACP] + phosphate = an acyl phosphate + holo-[ACP]. The protein operates within lipid metabolism; phospholipid metabolism. Its function is as follows. Catalyzes the reversible formation of acyl-phosphate (acyl-PO(4)) from acyl-[acyl-carrier-protein] (acyl-ACP). This enzyme utilizes acyl-ACP as fatty acyl donor, but not acyl-CoA. This chain is Phosphate acyltransferase, found in Heliobacterium modesticaldum (strain ATCC 51547 / Ice1).